A 487-amino-acid polypeptide reads, in one-letter code: Glycogen synthase (487 aa).

Residue Lys-19 participates in ADP-alpha-D-glucose binding.

The protein belongs to the glycosyltransferase 1 family. Bacterial/plant glycogen synthase subfamily.

The enzyme catalyses [(1-&gt;4)-alpha-D-glucosyl](n) + ADP-alpha-D-glucose = [(1-&gt;4)-alpha-D-glucosyl](n+1) + ADP + H(+). It functions in the pathway glycan biosynthesis; glycogen biosynthesis. Synthesizes alpha-1,4-glucan chains using ADP-glucose. The sequence is that of Glycogen synthase from Moorella thermoacetica (strain ATCC 39073 / JCM 9320).